We begin with the raw amino-acid sequence, 313 residues long: Acetaldehyde dehydrogenase 1 (313 aa).

NAD(+) is bound at residue 16–19 (SGNI). Catalysis depends on Cys131, which acts as the Acyl-thioester intermediate. Residues 162-170 (SAGPGTRAN) and Asn281 contribute to the NAD(+) site.

It belongs to the acetaldehyde dehydrogenase family.

It catalyses the reaction acetaldehyde + NAD(+) + CoA = acetyl-CoA + NADH + H(+). The polypeptide is Acetaldehyde dehydrogenase 1 (Mycobacterium sp. (strain JLS)).